The sequence spans 343 residues: Probable long-chain-alcohol O-fatty-acyltransferase 2 (343 aa).

The next 8 membrane-spanning stretches (helical) occupy residues 7-27, 36-56, 58-78, 117-137, 148-168, 235-255, 260-280, and 292-312; these read NLIKVWISALISISYCYYISS, LLSLLPIFIIFLLLPLFFSSV, FCVISGFFFTWLANFKLFLFA, PMSKWVLAFKLLIFSFLLHVY, FAFLALFTIHVYLEAELILVF, GMLATFIVSGLMHELIYFYVI, TWEVTCFFLLHGVVTCLEIAM, and AVSGLAITVFLLVTAGWLFYP.

This sequence belongs to the wax synthase family.

It localises to the membrane. It carries out the reaction a long chain fatty alcohol + a fatty acyl-CoA = a wax ester + CoA. Its function is as follows. Catalyzes the final step in the synthesis of long-chain linear esters (waxes). This Arabidopsis thaliana (Mouse-ear cress) protein is Probable long-chain-alcohol O-fatty-acyltransferase 2 (AT2).